Reading from the N-terminus, the 100-residue chain is NADH-quinone oxidoreductase subunit K (100 aa).

3 helical membrane-spanning segments follow: residues 4 to 24, 28 to 48, and 60 to 80; these read LQHG…GLVI, LLFM…AFVV, and VMYI…LALL.

This sequence belongs to the complex I subunit 4L family. NDH-1 is composed of 13 different subunits. Subunits NuoA, H, J, K, L, M, N constitute the membrane sector of the complex.

It localises to the cell inner membrane. It carries out the reaction a quinone + NADH + 5 H(+)(in) = a quinol + NAD(+) + 4 H(+)(out). Its function is as follows. NDH-1 shuttles electrons from NADH, via FMN and iron-sulfur (Fe-S) centers, to quinones in the respiratory chain. The immediate electron acceptor for the enzyme in this species is believed to be ubiquinone. Couples the redox reaction to proton translocation (for every two electrons transferred, four hydrogen ions are translocated across the cytoplasmic membrane), and thus conserves the redox energy in a proton gradient. The protein is NADH-quinone oxidoreductase subunit K of Citrobacter koseri (strain ATCC BAA-895 / CDC 4225-83 / SGSC4696).